The sequence spans 283 residues: Pantothenate synthetase (283 aa).

30–37 (MGNLHDGH) serves as a coordination point for ATP. His37 functions as the Proton donor in the catalytic mechanism. Gln61 provides a ligand contact to (R)-pantoate. Gln61 serves as a coordination point for beta-alanine. Residue 149–152 (GEKD) participates in ATP binding. Gln155 lines the (R)-pantoate pocket. 186-189 (LSSR) provides a ligand contact to ATP.

Belongs to the pantothenate synthetase family. As to quaternary structure, homodimer.

The protein resides in the cytoplasm. It carries out the reaction (R)-pantoate + beta-alanine + ATP = (R)-pantothenate + AMP + diphosphate + H(+). It participates in cofactor biosynthesis; (R)-pantothenate biosynthesis; (R)-pantothenate from (R)-pantoate and beta-alanine: step 1/1. Catalyzes the condensation of pantoate with beta-alanine in an ATP-dependent reaction via a pantoyl-adenylate intermediate. In Escherichia coli O6:K15:H31 (strain 536 / UPEC), this protein is Pantothenate synthetase.